The primary structure comprises 221 residues: Aspartic protease inhibitor 1 (221 aa).

The signal sequence occupies residues 1–23 (MMKCLFFLCLCLFPILVFSSTFT). Residues 24-32 (SQNPINLPS) constitute a propeptide that is removed on maturation. Residues 26–31 (NPINLP) carry the Vacuolar targeting signal motif. N51 carries N-linked (GlcNAc...) asparagine glycosylation. 2 disulfide bridges follow: C80/C125 and C174/C186.

This sequence belongs to the protease inhibitor I3 (leguminous Kunitz-type inhibitor) family. In terms of tissue distribution, tubers, young leaves and flower bud. Not detected in root, stem or mature leaves.

Its subcellular location is the vacuole. Inhibitor of cathepsin D (aspartic protease). May also inhibit trypsin and chymotrypsin (serine proteases). Protects the plant by inhibiting proteases of invading organisms. The chain is Aspartic protease inhibitor 1 from Solanum tuberosum (Potato).